A 225-amino-acid polypeptide reads, in one-letter code: Glutathione S-transferase A (225 aa).

The 83-residue stretch at 3 to 85 (KDMTLLWGSG…YLESQFKSQG (83 aa)) folds into the GST N-terminal domain. Position 18 (R18) interacts with glutathione. Residues 92-217 (CPAEQAMMYQ…WPPTWLESPQ (126 aa)) enclose the GST C-terminal domain.

Belongs to the GST superfamily. Theta family. In terms of assembly, homodimer. In terms of tissue distribution, found in all the tissues examined. Highest values found in liver and in intestinal mucosa.

Its subcellular location is the cytoplasm. It catalyses the reaction RX + glutathione = an S-substituted glutathione + a halide anion + H(+). In terms of biological role, conjugation of reduced glutathione to a wide number of exogenous and endogenous hydrophobic electrophiles. This Pleuronectes platessa (European plaice) protein is Glutathione S-transferase A.